The following is a 151-amino-acid chain: Deoxyuridine 5'-triphosphate nucleotidohydrolase (151 aa).

Residues 70-72 (RSG), Asn-83, 87-89 (LID), and Met-97 contribute to the substrate site.

The protein belongs to the dUTPase family. Mg(2+) serves as cofactor.

It carries out the reaction dUTP + H2O = dUMP + diphosphate + H(+). Its pathway is pyrimidine metabolism; dUMP biosynthesis; dUMP from dCTP (dUTP route): step 2/2. Functionally, this enzyme is involved in nucleotide metabolism: it produces dUMP, the immediate precursor of thymidine nucleotides and it decreases the intracellular concentration of dUTP so that uracil cannot be incorporated into DNA. The chain is Deoxyuridine 5'-triphosphate nucleotidohydrolase from Actinobacillus pleuropneumoniae serotype 5b (strain L20).